A 99-amino-acid chain; its full sequence is Large ribosomal subunit protein eL30 (99 aa).

Belongs to the eukaryotic ribosomal protein eL30 family.

The protein is Large ribosomal subunit protein eL30 of Methanosarcina acetivorans (strain ATCC 35395 / DSM 2834 / JCM 12185 / C2A).